A 452-amino-acid polypeptide reads, in one-letter code: tRNA modification GTPase MnmE (452 aa).

Residues Arg-21, Glu-78, and Lys-118 each coordinate (6S)-5-formyl-5,6,7,8-tetrahydrofolate. Positions 214–375 (GMKVVIAGRP…LREHLKQAMG (162 aa)) constitute a TrmE-type G domain. Asn-224 lines the K(+) pocket. Residues 224 to 229 (NAGKSS), 243 to 249 (TDIAGTT), and 268 to 271 (DTAG) each bind GTP. Ser-228 is a binding site for Mg(2+). The K(+) site is built by Thr-243, Ile-245, and Thr-248. Position 249 (Thr-249) interacts with Mg(2+). A (6S)-5-formyl-5,6,7,8-tetrahydrofolate-binding site is contributed by Lys-452.

Belongs to the TRAFAC class TrmE-Era-EngA-EngB-Septin-like GTPase superfamily. TrmE GTPase family. In terms of assembly, homodimer. Heterotetramer of two MnmE and two MnmG subunits. It depends on K(+) as a cofactor.

It localises to the cytoplasm. Exhibits a very high intrinsic GTPase hydrolysis rate. Involved in the addition of a carboxymethylaminomethyl (cmnm) group at the wobble position (U34) of certain tRNAs, forming tRNA-cmnm(5)s(2)U34. The sequence is that of tRNA modification GTPase MnmE from Haemophilus influenzae (strain PittGG).